Here is a 383-residue protein sequence, read N- to C-terminus: Dimethylsulfoniopropionate lyase 6 (383 aa).

The protein belongs to the aspartate/glutamate racemases family. ALMA1 subfamily. Homotetramer.

It catalyses the reaction S,S-dimethyl-beta-propiothetin = acrylate + dimethyl sulfide + H(+). Mediates cleavage of dimethylsulfoniopropionate (DMSP) into dimethyl sulfide (DMS) and acrylate. DMS is the principal form by which sulfur is transported from oceans to the atmosphere and is a key component of the ocean sulfur cycle. This is Dimethylsulfoniopropionate lyase 6 from Emiliania huxleyi (strain CCMP1516).